The primary structure comprises 235 residues: Large ribosomal subunit protein uL1 (235 aa).

Belongs to the universal ribosomal protein uL1 family. In terms of assembly, part of the 50S ribosomal subunit.

In terms of biological role, binds directly to 23S rRNA. The L1 stalk is quite mobile in the ribosome, and is involved in E site tRNA release. Functionally, protein L1 is also a translational repressor protein, it controls the translation of the L11 operon by binding to its mRNA. The chain is Large ribosomal subunit protein uL1 from Citrobacter koseri (strain ATCC BAA-895 / CDC 4225-83 / SGSC4696).